The following is a 100-amino-acid chain: Large ribosomal subunit protein uL23 (100 aa).

It belongs to the universal ribosomal protein uL23 family. In terms of assembly, part of the 50S ribosomal subunit. Contacts protein L29, and trigger factor when it is bound to the ribosome.

Its function is as follows. One of the early assembly proteins it binds 23S rRNA. One of the proteins that surrounds the polypeptide exit tunnel on the outside of the ribosome. Forms the main docking site for trigger factor binding to the ribosome. The polypeptide is Large ribosomal subunit protein uL23 (Mycobacteroides abscessus (strain ATCC 19977 / DSM 44196 / CCUG 20993 / CIP 104536 / JCM 13569 / NCTC 13031 / TMC 1543 / L948) (Mycobacterium abscessus)).